The primary structure comprises 63 residues: Protein sigN172 (63 aa).

This Dictyostelium discoideum (Social amoeba) protein is Protein sigN172.